The sequence spans 72 residues: SRY-related protein MG43 (72 aa).

The segment at residues 1 to 69 (VKRPMNAFMV…KHMADYPDYK (69 aa)) is a DNA-binding region (HMG box).

The protein resides in the nucleus. This Tarentola mauritanica (Common wall gecko) protein is SRY-related protein MG43.